The chain runs to 229 residues: Chromophore lyase CpcT/CpeT 1 (229 aa).

Belongs to the CpcT/CpeT biliprotein lyase family.

In terms of biological role, covalently attaches a chromophore to Cys residue(s) of phycobiliproteins. In Gloeobacter violaceus (strain ATCC 29082 / PCC 7421), this protein is Chromophore lyase CpcT/CpeT 1.